The chain runs to 140 residues: Nucleoside diphosphate kinase (140 aa).

Positions 11, 59, 87, 93, 104, and 114 each coordinate ATP. Catalysis depends on histidine 117, which acts as the Pros-phosphohistidine intermediate.

This sequence belongs to the NDK family. As to quaternary structure, homotetramer. Mg(2+) serves as cofactor.

The protein localises to the cytoplasm. It catalyses the reaction a 2'-deoxyribonucleoside 5'-diphosphate + ATP = a 2'-deoxyribonucleoside 5'-triphosphate + ADP. The enzyme catalyses a ribonucleoside 5'-diphosphate + ATP = a ribonucleoside 5'-triphosphate + ADP. Its function is as follows. Major role in the synthesis of nucleoside triphosphates other than ATP. The ATP gamma phosphate is transferred to the NDP beta phosphate via a ping-pong mechanism, using a phosphorylated active-site intermediate. This Rhodospirillum rubrum (strain ATCC 11170 / ATH 1.1.1 / DSM 467 / LMG 4362 / NCIMB 8255 / S1) protein is Nucleoside diphosphate kinase.